Consider the following 261-residue polypeptide: Uridine-cytidine kinase 2-B (261 aa).

An ATP-binding site is contributed by 29-37 (GGTASGKSS). Asp86, Tyr114, His119, Arg168, Arg178, and Gln186 together coordinate substrate. Position 215 (Asp215) interacts with ATP. Residues 238–261 (RQNGFQNGHGTPRQRRTSESSRPH) are disordered.

This sequence belongs to the uridine kinase family. Homotetramer.

The enzyme catalyses uridine + ATP = UMP + ADP + H(+). The catalysed reaction is cytidine + ATP = CMP + ADP + H(+). Its pathway is pyrimidine metabolism; CTP biosynthesis via salvage pathway; CTP from cytidine: step 1/3. It participates in pyrimidine metabolism; UMP biosynthesis via salvage pathway; UMP from uridine: step 1/1. In terms of biological role, phosphorylates uridine and cytidine to uridine monophosphate and cytidine monophosphate. Does not phosphorylate deoxyribonucleosides or purine ribonucleosides. Can use ATP or GTP as a phosphate donor. This is Uridine-cytidine kinase 2-B (uck2b) from Danio rerio (Zebrafish).